We begin with the raw amino-acid sequence, 979 residues long: UPF0182 protein MRA_0066 (979 aa).

Helical transmembrane passes span 19-39, 63-83, 114-134, 174-194, 211-231, 260-280, and 288-308; these read LVTA…LVDI, LAIV…ALLL, LFGW…ASFD, WLFV…YLFG, VQLA…YWLD, KLVL…AIFL, and MAAA…PLLM. The tract at residues 898 to 948 is disordered; the sequence is GTGRVATARGGDAASAPPPGAGGPAPPQAVPPPRTTQPPAAPPRGPDVPPA. Positions 913–946 are enriched in pro residues; the sequence is APPPGAGGPAPPQAVPPPRTTQPPAAPPRGPDVP.

This sequence belongs to the UPF0182 family.

The protein localises to the cell membrane. This is UPF0182 protein MRA_0066 from Mycobacterium tuberculosis (strain ATCC 25177 / H37Ra).